Reading from the N-terminus, the 874-residue chain is Alanine--tRNA ligase (874 aa).

The Zn(2+) site is built by His-562, His-566, Cys-665, and His-669.

It belongs to the class-II aminoacyl-tRNA synthetase family. Requires Zn(2+) as cofactor.

Its subcellular location is the cytoplasm. It catalyses the reaction tRNA(Ala) + L-alanine + ATP = L-alanyl-tRNA(Ala) + AMP + diphosphate. Functionally, catalyzes the attachment of alanine to tRNA(Ala) in a two-step reaction: alanine is first activated by ATP to form Ala-AMP and then transferred to the acceptor end of tRNA(Ala). Also edits incorrectly charged Ser-tRNA(Ala) and Gly-tRNA(Ala) via its editing domain. The chain is Alanine--tRNA ligase from Pseudomonas fluorescens (strain Pf0-1).